Here is a 127-residue protein sequence, read N- to C-terminus: Competence protein ComGF (127 aa).

In terms of assembly, the transformation pili are flexible filaments, consisting mainly of the major pilin ComGC and smaller amounts of the minor pilins, including at least ComGD, ComGF and ComGG. Interacts with ComGD. Interacts with ComGG.

The protein localises to the cell membrane. The protein resides in the fimbrium. Its function is as follows. Required for formation of the type IV-like pilus (T4P) that plays a role in transformation. Involved in transformation. Transformation pili are dynamically extended and retracted, perhaps thereby promoting DNA uptake and transformation. Required for transformation and DNA binding. The protein is Competence protein ComGF (comGF) of Bacillus subtilis (strain 168).